Reading from the N-terminus, the 185-residue chain is Ribosome-recycling factor (185 aa).

Belongs to the RRF family.

The protein localises to the cytoplasm. Responsible for the release of ribosomes from messenger RNA at the termination of protein biosynthesis. May increase the efficiency of translation by recycling ribosomes from one round of translation to another. The polypeptide is Ribosome-recycling factor (Nocardioides sp. (strain ATCC BAA-499 / JS614)).